Reading from the N-terminus, the 59-residue chain is MLRWAAIFFIIAIVAAVFGFTGIASAAAGIAKFLFILFLVVALIMLILGITAGTKITRH.

2 helical membrane passes run tryptophan 4 to alanine 24 and phenylalanine 33 to glycine 53.

Belongs to the UPF0391 family.

It is found in the cell membrane. The chain is UPF0391 membrane protein Geob_0344 from Geotalea daltonii (strain DSM 22248 / JCM 15807 / FRC-32) (Geobacter daltonii).